Consider the following 257-residue polypeptide: tRNA uridine(34) hydroxylase (257 aa).

The Rhodanese domain occupies 128 to 222 (NGRRLVMLDA…YFEQVGGEGY (95 aa)). Cysteine 182 functions as the Cysteine persulfide intermediate in the catalytic mechanism.

The protein belongs to the TrhO family.

The enzyme catalyses uridine(34) in tRNA + AH2 + O2 = 5-hydroxyuridine(34) in tRNA + A + H2O. Functionally, catalyzes oxygen-dependent 5-hydroxyuridine (ho5U) modification at position 34 in tRNAs. This is tRNA uridine(34) hydroxylase from Xylella fastidiosa (strain M23).